A 75-amino-acid polypeptide reads, in one-letter code: Small ribosomal subunit protein bS18 (75 aa).

It belongs to the bacterial ribosomal protein bS18 family. Part of the 30S ribosomal subunit. Forms a tight heterodimer with protein bS6.

Functionally, binds as a heterodimer with protein bS6 to the central domain of the 16S rRNA, where it helps stabilize the platform of the 30S subunit. This chain is Small ribosomal subunit protein bS18, found in Shewanella amazonensis (strain ATCC BAA-1098 / SB2B).